The following is a 283-amino-acid chain: Bifunctional protein FolD (283 aa).

Residues 165–167 (GAS), Ser-190, and Ile-231 each bind NADP(+).

This sequence belongs to the tetrahydrofolate dehydrogenase/cyclohydrolase family. As to quaternary structure, homodimer.

The enzyme catalyses (6R)-5,10-methylene-5,6,7,8-tetrahydrofolate + NADP(+) = (6R)-5,10-methenyltetrahydrofolate + NADPH. The catalysed reaction is (6R)-5,10-methenyltetrahydrofolate + H2O = (6R)-10-formyltetrahydrofolate + H(+). The protein operates within one-carbon metabolism; tetrahydrofolate interconversion. Functionally, catalyzes the oxidation of 5,10-methylenetetrahydrofolate to 5,10-methenyltetrahydrofolate and then the hydrolysis of 5,10-methenyltetrahydrofolate to 10-formyltetrahydrofolate. The sequence is that of Bifunctional protein FolD from Bordetella bronchiseptica (strain ATCC BAA-588 / NCTC 13252 / RB50) (Alcaligenes bronchisepticus).